The chain runs to 428 residues: Enolase (428 aa).

Glutamine 163 contributes to the (2R)-2-phosphoglycerate binding site. Glutamate 205 functions as the Proton donor in the catalytic mechanism. Positions 242, 283, and 310 each coordinate Mg(2+). Lysine 335, arginine 364, serine 365, and lysine 386 together coordinate (2R)-2-phosphoglycerate. The active-site Proton acceptor is lysine 335.

Belongs to the enolase family. Mg(2+) serves as cofactor.

The protein resides in the cytoplasm. It localises to the secreted. The protein localises to the cell surface. The catalysed reaction is (2R)-2-phosphoglycerate = phosphoenolpyruvate + H2O. Its pathway is carbohydrate degradation; glycolysis; pyruvate from D-glyceraldehyde 3-phosphate: step 4/5. In terms of biological role, catalyzes the reversible conversion of 2-phosphoglycerate (2-PG) into phosphoenolpyruvate (PEP). It is essential for the degradation of carbohydrates via glycolysis. In Sulfurihydrogenibium sp. (strain YO3AOP1), this protein is Enolase.